The following is a 263-amino-acid chain: Endonuclease 8 (263 aa).

P2 acts as the Schiff-base intermediate with DNA in catalysis. E3 serves as the catalytic Proton donor. K53 functions as the Proton donor; for beta-elimination activity in the catalytic mechanism. DNA is bound by residues Q70, R125, and N169. An FPG-type zinc finger spans residues 229–263; it reads KVFHRDGEPCERCGSIIEKTTLSSRPFYWCPGCQH. R253 functions as the Proton donor; for delta-elimination activity in the catalytic mechanism.

This sequence belongs to the FPG family. It depends on Zn(2+) as a cofactor.

It catalyses the reaction 2'-deoxyribonucleotide-(2'-deoxyribose 5'-phosphate)-2'-deoxyribonucleotide-DNA = a 3'-end 2'-deoxyribonucleotide-(2,3-dehydro-2,3-deoxyribose 5'-phosphate)-DNA + a 5'-end 5'-phospho-2'-deoxyribonucleoside-DNA + H(+). Its function is as follows. Involved in base excision repair of DNA damaged by oxidation or by mutagenic agents. Acts as a DNA glycosylase that recognizes and removes damaged bases. Has a preference for oxidized pyrimidines, such as thymine glycol, 5,6-dihydrouracil and 5,6-dihydrothymine. Has AP (apurinic/apyrimidinic) lyase activity and introduces nicks in the DNA strand. Cleaves the DNA backbone by beta-delta elimination to generate a single-strand break at the site of the removed base with both 3'- and 5'-phosphates. The chain is Endonuclease 8 from Escherichia coli (strain K12 / MC4100 / BW2952).